A 331-amino-acid chain; its full sequence is Histone-lysine N-methyltransferase, H3 lysine-9 specific dim-5 (331 aa).

A Pre-SET domain is found at 77–159 (VGCSCASDEE…DCPNRVVERG (83 aa)). The Zn(2+) site is built by Cys79, Cys81, Cys87, Cys92, Cys94, Cys141, Cys145, Cys147, and Cys151. Positions 162–297 (VPLQIFRTKD…KGTELTFDYV (136 aa)) constitute an SET domain. S-adenosyl-L-methionine contacts are provided by residues 172 to 174 (RGW), Asp215, Tyr217, Arg251, and 254 to 255 (NH). Cys257, Cys319, Cys321, and Cys326 together coordinate Zn(2+). Residues 315-331 (EMTKCLCGTAKCRGYLW) form the Post-SET domain.

It belongs to the class V-like SAM-binding methyltransferase superfamily. Histone-lysine methyltransferase family. Suvar3-9 subfamily.

It localises to the nucleus. The protein resides in the chromosome. It catalyses the reaction L-lysyl(9)-[histone H3] + 3 S-adenosyl-L-methionine = N(6),N(6),N(6)-trimethyl-L-lysyl(9)-[histone H3] + 3 S-adenosyl-L-homocysteine + 3 H(+). Functionally, histone methyltransferase that specifically trimethylates histone H3 to form H3K9me3. H3K9me3 marks chromatin regions for DNA methylation. Dim-5 recognizes Arg-8 to Gly-12 of the H3 tail with Thr-11 and Gly-12 being the most important specificity determinants, the recognition of whcih is important to distinguish H3K9 from H3K27 and H4K20. This chain is Histone-lysine N-methyltransferase, H3 lysine-9 specific dim-5 (dim-5), found in Neurospora crassa (strain ATCC 24698 / 74-OR23-1A / CBS 708.71 / DSM 1257 / FGSC 987).